The following is a 254-amino-acid chain: HTH-type transcriptional repressor DasR (254 aa).

One can recognise an HTH gntR-type domain in the interval 17–87 (RTARVPKYYR…QGKGTFVAKP (71 aa)). A DNA-binding region (H-T-H motif) is located at residues 47 to 66 (ERTLAAEFDTSRTTVRQALQ).

The protein localises to the cytoplasm. Its activity is regulated as follows. Binding to the target genes is abolished by GlcN6P, a central molecule in N-acetylglucosamine metabolism. In terms of biological role, global regulator that is part of the nutrient-sensing system. In the absence of glucosamine 6-P (GlcN6P), represses the phosphotransferase system (PTS) specific for the uptake of N-acetylglucosamine (PTSNag), and genes involved in the metabolism of chitin, as well as several genes involved in development, thereby linking carbon availability to morphogenesis. Also regulates the expression of the ABC transporters DasABC and NgcEFG, which are involved in N,N'-diacetylchitobiose ((GlcNAc)2) uptake. Binds to the DNA consensus sequence 5'-ACTGGTCTAGACCACT-3'. This chain is HTH-type transcriptional repressor DasR (dasR), found in Streptomyces coelicolor (strain ATCC BAA-471 / A3(2) / M145).